A 70-amino-acid chain; its full sequence is Phycobilisome 8.1 kDa linker polypeptide, phycocyanin-associated, rod (70 aa).

Residues S5–L63 form the CpcD-like domain.

It belongs to the phycobilisome linker protein family.

It localises to the cellular thylakoid membrane. Rod linker protein, associated with phycocyanin. Linker polypeptides determine the state of aggregation and the location of the disk-shaped phycobiliprotein units within the phycobilisome and modulate their spectroscopic properties in order to mediate a directed and optimal energy transfer. In Microchaete diplosiphon (Fremyella diplosiphon), this protein is Phycobilisome 8.1 kDa linker polypeptide, phycocyanin-associated, rod (cpcD3).